The sequence spans 751 residues: MIIRSSEPEVKIAVDRDPIKTSFEEWARPGHFSRTIAKGNPDTTTWIWNLHADAHDFDSHTGDLEEISRKVFSAHFGQLSIIFLWLSGMYFHGARFSNYEAWLSDPTHIGPSAQVVWPIVGQEILNGDVGGGFRGIQITSGFFQIWRASGITSELQLYCTAIGALIFASLMLFAGWFHYHKAAPKLAWFQDVESMLNHHLAGLLGLGSLSWAGHQIHVSLPINQFLDAGVDPKEIPLPHEFILNRDLLAQLYPSFAEGATPFFTLNWSKYAEFLSFRGGLDPITGGLWLSDIAHHHLAIAILFLIAGHMYRTNWGIGHGLKDILEAHKGPFTGQGHKGLYEILTTSWHAQLSLNLAMLGSTTIVVAHHMYSMPPYPYLATDYGTQLSLFTHHMWIGGFLIVGAAAHAAIFMVRDYDPTTRYNDLLDRVLRHRDAIISHLNWVCIFLGFHSFGLYIHNDTMSALGRPQDMFSDAAIQLQPIFAQWIQNIHAGAPGVTAPGATTSTSLTWGGGELVAIGGKVALLPIPLGTADFLVHHIHAFTIHVTVLILLKGVLFARSSRLIPDKANLGFRFPCDGPGRGGTCQVSAWDHVFLGLFWMYNSISVVIFHFSWKMQSDVWGTISDQGIVTHITGGNFAQSSITINGWLRDFLWAQASQVIQSYGSSLSAYGLFFLGAHFVWAFSLMFLFSGRGYWQELIESIVWAHNKLKVAPATQPRALSIIQGRAVGVTHYLLGGIATTWAFFLARIIAVG.

The next 8 helical transmembrane spans lie at 71–94 (VFSA…FHGA), 157–180 (LYCT…FHYH), 196–220 (LNHH…HVSL), 292–310 (IAHH…GHMY), 347–370 (WHAQ…HHMY), 386–412 (LSLF…IFMV), 434–456 (AIIS…LYIH), and 532–550 (FLVH…LILL). The [4Fe-4S] cluster site is built by C574 and C583. The next 2 helical transmembrane spans lie at 590–611 (HVFL…HFSW) and 665–687 (LSAY…MFLF). H676 is a chlorophyll a' binding site. Chlorophyll a is bound by residues M684 and Y692. W693 contributes to the phylloquinone binding site. The helical transmembrane segment at 725–745 (AVGVTHYLLGGIATTWAFFLA) threads the bilayer.

Belongs to the PsaA/PsaB family. In terms of assembly, the PsaA/B heterodimer binds the P700 chlorophyll special pair and subsequent electron acceptors. PSI consists of a core antenna complex that captures photons, and an electron transfer chain that converts photonic excitation into a charge separation. The eukaryotic PSI reaction center is composed of at least 11 subunits. P700 is a chlorophyll a/chlorophyll a' dimer, A0 is one or more chlorophyll a, A1 is one or both phylloquinones and FX is a shared 4Fe-4S iron-sulfur center. is required as a cofactor.

Its subcellular location is the plastid. The protein resides in the chloroplast thylakoid membrane. It catalyses the reaction reduced [plastocyanin] + hnu + oxidized [2Fe-2S]-[ferredoxin] = oxidized [plastocyanin] + reduced [2Fe-2S]-[ferredoxin]. Its function is as follows. PsaA and PsaB bind P700, the primary electron donor of photosystem I (PSI), as well as the electron acceptors A0, A1 and FX. PSI is a plastocyanin-ferredoxin oxidoreductase, converting photonic excitation into a charge separation, which transfers an electron from the donor P700 chlorophyll pair to the spectroscopically characterized acceptors A0, A1, FX, FA and FB in turn. Oxidized P700 is reduced on the lumenal side of the thylakoid membrane by plastocyanin. This chain is Photosystem I P700 chlorophyll a apoprotein A1, found in Zea mays (Maize).